The following is a 370-amino-acid chain: Putative agmatine deiminase (370 aa).

The active-site Amidino-cysteine intermediate is the Cys361.

It belongs to the agmatine deiminase family.

It catalyses the reaction agmatine + H2O = N-carbamoylputrescine + NH4(+). The chain is Putative agmatine deiminase from Shewanella sp. (strain MR-4).